We begin with the raw amino-acid sequence, 64 residues long: Small, acid-soluble spore protein H (64 aa).

Belongs to the SspH family.

Its subcellular location is the spore core. This Acetivibrio thermocellus (strain ATCC 27405 / DSM 1237 / JCM 9322 / NBRC 103400 / NCIMB 10682 / NRRL B-4536 / VPI 7372) (Clostridium thermocellum) protein is Small, acid-soluble spore protein H.